Consider the following 317-residue polypeptide: ADIPOR-like receptor IZH2 (317 aa).

The Cytoplasmic segment spans residues 1-78; that stretch reads MSTLLERTKS…TFKSLFYLHN (78 aa). Residues 79 to 99 traverse the membrane as a helical segment; it reads ESVNIYSHLIPALGFFTVLLL. Topologically, residues 100–110 are extracellular; that stretch reads DKSTIKVFATT. Residues 111 to 131 traverse the membrane as a helical segment; sequence TWLDHMVIDLFYSGAFACLIL. The Cytoplasmic segment spans residues 132–153; the sequence is SSSFHCLKSHSLRIATLGNKLD. Residues 154-174 form a helical membrane-spanning segment; it reads YLGICILIVTSMVSILYYGYF. At 175–176 the chain is on the extracellular side; that stretch reads EK. A helical membrane pass occupies residues 177–197; the sequence is FSLFCLFALITVSFGIACSIV. The Cytoplasmic segment spans residues 198–212; that stretch reads SLKDKFRKREWRPYR. A helical transmembrane segment spans residues 213–233; it reads AGLFVCFGLSSIIPIFSGLYC. At 234-242 the chain is on the extracellular side; that stretch reads YSFSEIWTQ. The helical transmembrane segment at 243–263 threads the bilayer; sequence IQLFWVLLGGVLYIIGAVLYG. Residues 264 to 276 are Cytoplasmic-facing; the sequence is MRFPEKICPGKFD. A helical membrane pass occupies residues 277 to 297; the sequence is IWGHSHQLFHFLVVIAALCHL. Residues 298–317 lie on the Extracellular side of the membrane; that stretch reads RGLLNSYELVHIKMENGIVS.

Belongs to the ADIPOR family.

The protein localises to the membrane. Its function is as follows. Probable receptor, which is involved in metabolic pathways that regulate lipid metabolism such as fatty acid oxidation. This is ADIPOR-like receptor IZH2 (IZH2) from Saccharomyces cerevisiae (strain ATCC 204508 / S288c) (Baker's yeast).